The primary structure comprises 261 residues: UPF0246 protein Reut_A1014 (261 aa).

This sequence belongs to the UPF0246 family.

In Cupriavidus pinatubonensis (strain JMP 134 / LMG 1197) (Cupriavidus necator (strain JMP 134)), this protein is UPF0246 protein Reut_A1014.